The chain runs to 397 residues: F-box protein At3g28330 (397 aa).

The F-box domain maps to 6–56; that stretch reads KKDMDFLTEDLWEIILARLPLKSIITTPKLVCKVWKSIIESRCFRDLFQSL.

This is F-box protein At3g28330 from Arabidopsis thaliana (Mouse-ear cress).